A 160-amino-acid chain; its full sequence is Ribosome-binding factor A (160 aa).

The segment covering 112 to 122 (KARQSDEKVRE) has biased composition (basic and acidic residues). The segment at 112–160 (KARQSDEKVREASAGATYAGEADPYRKPDEDETDTEGAVEADETDDTAK) is disordered. The span at 141–160 (EDETDTEGAVEADETDDTAK) shows a compositional bias: acidic residues.

It belongs to the RbfA family. Monomer. Binds 30S ribosomal subunits, but not 50S ribosomal subunits or 70S ribosomes.

It is found in the cytoplasm. In terms of biological role, one of several proteins that assist in the late maturation steps of the functional core of the 30S ribosomal subunit. Associates with free 30S ribosomal subunits (but not with 30S subunits that are part of 70S ribosomes or polysomes). Required for efficient processing of 16S rRNA. May interact with the 5'-terminal helix region of 16S rRNA. This Streptomyces coelicolor (strain ATCC BAA-471 / A3(2) / M145) protein is Ribosome-binding factor A.